The chain runs to 291 residues: Heterogeneous nuclear ribonucleoprotein D-like-B (291 aa).

RRM domains follow at residues 34 to 116 (SKMF…QGKE) and 119 to 196 (KKVF…AAQP). The interval 196 to 226 (PKEVYRQQQQKQQKGGRGGTRGRGRGQGYSN) is disordered. The segment covering 210 to 222 (GGRGGTRGRGRGQ) has biased composition (gly residues).

It localises to the nucleus. Its subcellular location is the cytoplasm. In terms of biological role, acts as a transcriptional regulator. Binds DNA and RNA. This is Heterogeneous nuclear ribonucleoprotein D-like-B (hnrnpdl-b) from Xenopus laevis (African clawed frog).